Here is a 110-residue protein sequence, read N- to C-terminus: Large ribosomal subunit protein uL22 (110 aa).

The protein belongs to the universal ribosomal protein uL22 family. In terms of assembly, part of the 50S ribosomal subunit.

In terms of biological role, this protein binds specifically to 23S rRNA; its binding is stimulated by other ribosomal proteins, e.g. L4, L17, and L20. It is important during the early stages of 50S assembly. It makes multiple contacts with different domains of the 23S rRNA in the assembled 50S subunit and ribosome. Functionally, the globular domain of the protein is located near the polypeptide exit tunnel on the outside of the subunit, while an extended beta-hairpin is found that lines the wall of the exit tunnel in the center of the 70S ribosome. The protein is Large ribosomal subunit protein uL22 of Nitrosococcus oceani (strain ATCC 19707 / BCRC 17464 / JCM 30415 / NCIMB 11848 / C-107).